Here is a 218-residue protein sequence, read N- to C-terminus: Riboflavin synthase (218 aa).

2 Lumazine-binding repeats span residues 1–97 (MFTG…FGGH) and 98–194 (IVSG…ERLL). Residues 4–6 (GII), 48–50 (CLT), 62–67 (DLSIET), 101–103 (GHV), Lys-136, 145–147 (SLT), and 159–164 (TIVPHT) each bind 2,4-dihydroxypteridine.

As to quaternary structure, homotrimer.

It catalyses the reaction 2 6,7-dimethyl-8-(1-D-ribityl)lumazine + H(+) = 5-amino-6-(D-ribitylamino)uracil + riboflavin. It participates in cofactor biosynthesis; riboflavin biosynthesis; riboflavin from 2-hydroxy-3-oxobutyl phosphate and 5-amino-6-(D-ribitylamino)uracil: step 2/2. Its function is as follows. Catalyzes the dismutation of two molecules of 6,7-dimethyl-8-ribityllumazine, resulting in the formation of riboflavin and 5-amino-6-(D-ribitylamino)uracil. The chain is Riboflavin synthase from Photobacterium phosphoreum.